Consider the following 542-residue polypeptide: Membrane protein insertase YidC (542 aa).

5 helical membrane-spanning segments follow: residues 7-27, 338-358, 417-437, 455-475, and 494-514; these read LLVM…QQDF, FALL…IIGV, MGGC…YWTF, LSAQ…MFLL, and FMPV…VLYW.

Belongs to the OXA1/ALB3/YidC family. Type 1 subfamily. In terms of assembly, interacts with the Sec translocase complex via SecD. Specifically interacts with transmembrane segments of nascent integral membrane proteins during membrane integration.

It localises to the cell inner membrane. Its function is as follows. Required for the insertion and/or proper folding and/or complex formation of integral membrane proteins into the membrane. Involved in integration of membrane proteins that insert both dependently and independently of the Sec translocase complex, as well as at least some lipoproteins. Aids folding of multispanning membrane proteins. The sequence is that of Membrane protein insertase YidC from Actinobacillus pleuropneumoniae serotype 3 (strain JL03).